Consider the following 220-residue polypeptide: N-(5'-phosphoribosyl)anthranilate isomerase (220 aa).

It belongs to the TrpF family.

It catalyses the reaction N-(5-phospho-beta-D-ribosyl)anthranilate = 1-(2-carboxyphenylamino)-1-deoxy-D-ribulose 5-phosphate. It functions in the pathway amino-acid biosynthesis; L-tryptophan biosynthesis; L-tryptophan from chorismate: step 3/5. This is N-(5'-phosphoribosyl)anthranilate isomerase from Xylella fastidiosa (strain 9a5c).